Here is a 353-residue protein sequence, read N- to C-terminus: ATP-dependent kinase YFH7 (353 aa).

Position 31–39 (31–39 (GSPGSGKST)) interacts with ATP.

This sequence belongs to the YFH7 family.

Its function is as follows. ATP-dependent kinase that could be involved in endoplasmic reticulum membrane assembly. This Saccharomyces cerevisiae (strain ATCC 204508 / S288c) (Baker's yeast) protein is ATP-dependent kinase YFH7 (YFH7).